The chain runs to 248 residues: MAGHSQFKNIMHKKGKQDAIRSKLFSKLAREITVAAKLGLPDPAMNARLRAAVLAARAENMPKDNIERAIKKASAADGENYDEVRYEGYAPGGVALIVEALTDNRNRTAGEVRSYFTKSGGSLAETGAVSFMFDHVGLIEFPASVASEEAMLEAAIEAGAEDVQSNEETHEIITSLESLRDVAQALETKFGEPRKASLIWKAQNAIAVDDEAGEKILRLVNLLEENDDVQNVYANFEVSDTLLAKLGD.

The protein belongs to the TACO1 family.

Its subcellular location is the cytoplasm. This is Probable transcriptional regulatory protein Bind_0345 from Beijerinckia indica subsp. indica (strain ATCC 9039 / DSM 1715 / NCIMB 8712).